The following is a 678-amino-acid chain: Probable 3',5'-cyclic phosphodiesterase pde-3 (678 aa).

Disordered stretches follow at residues 1 to 27 (MSPG…FQPT), 52 to 95 (AEMR…VLGG), and 223 to 250 (TVPA…NEHE). Residues 7–19 (AVGGVSPPVMVPG) are compositionally biased toward low complexity. Composition is skewed to polar residues over residues 60 to 85 (TATS…NSGV) and 231 to 246 (ARSS…PSNN). In terms of domain architecture, PDEase spans 281–632 (RYDTRELDTD…RKWKEQIELE (352 aa)). The active-site Proton donor is histidine 356. Positions 360, 421, 422, and 531 each coordinate a divalent metal cation. Residues 654–678 (EEESASTSDSPDPRRDSPLDSDLSQ) form a disordered region.

It belongs to the cyclic nucleotide phosphodiesterase family. A divalent metal cation is required as a cofactor.

The catalysed reaction is a nucleoside 3',5'-cyclic phosphate + H2O = a nucleoside 5'-phosphate + H(+). This is Probable 3',5'-cyclic phosphodiesterase pde-3 (pde-3) from Caenorhabditis elegans.